A 275-amino-acid polypeptide reads, in one-letter code: 3-methyl-2-oxobutanoate hydroxymethyltransferase (275 aa).

Residues Asp-51 and Asp-90 each contribute to the Mg(2+) site. Residues 51–52 (DS), Asp-90, and Lys-120 each bind 3-methyl-2-oxobutanoate. Glu-122 lines the Mg(2+) pocket. Residue Glu-189 is the Proton acceptor of the active site.

The protein belongs to the PanB family. In terms of assembly, homodecamer; pentamer of dimers. The cofactor is Mg(2+).

It is found in the cytoplasm. It catalyses the reaction 3-methyl-2-oxobutanoate + (6R)-5,10-methylene-5,6,7,8-tetrahydrofolate + H2O = 2-dehydropantoate + (6S)-5,6,7,8-tetrahydrofolate. It participates in cofactor biosynthesis; (R)-pantothenate biosynthesis; (R)-pantoate from 3-methyl-2-oxobutanoate: step 1/2. In terms of biological role, catalyzes the reversible reaction in which hydroxymethyl group from 5,10-methylenetetrahydrofolate is transferred onto alpha-ketoisovalerate to form ketopantoate. The protein is 3-methyl-2-oxobutanoate hydroxymethyltransferase of Phenylobacterium zucineum (strain HLK1).